Consider the following 191-residue polypeptide: Large ribosomal subunit protein uL5 (191 aa).

The protein belongs to the universal ribosomal protein uL5 family. As to quaternary structure, part of the 50S ribosomal subunit; part of the 5S rRNA/L5/L18/L25 subcomplex. Contacts the 5S rRNA and the P site tRNA. Forms a bridge to the 30S subunit in the 70S ribosome.

Functionally, this is one of the proteins that bind and probably mediate the attachment of the 5S RNA into the large ribosomal subunit, where it forms part of the central protuberance. In the 70S ribosome it contacts protein S13 of the 30S subunit (bridge B1b), connecting the 2 subunits; this bridge is implicated in subunit movement. Contacts the P site tRNA; the 5S rRNA and some of its associated proteins might help stabilize positioning of ribosome-bound tRNAs. The protein is Large ribosomal subunit protein uL5 of Micrococcus luteus (strain ATCC 4698 / DSM 20030 / JCM 1464 / CCM 169 / CCUG 5858 / IAM 1056 / NBRC 3333 / NCIMB 9278 / NCTC 2665 / VKM Ac-2230) (Micrococcus lysodeikticus).